The following is a 283-amino-acid chain: Pyridoxine/pyridoxal/pyridoxamine kinase (283 aa).

Residues S23 and H59 each coordinate substrate. D125 lines the ATP pocket. Position 136 (Y136) interacts with Mg(2+). ATP is bound by residues T157, E162, T195, 222-225 (HAHV), and T232. Residue E162 coordinates Mg(2+). D234 contributes to the substrate binding site.

It belongs to the pyridoxine kinase family. PdxK subfamily. As to quaternary structure, homodimer. Mg(2+) serves as cofactor.

The enzyme catalyses pyridoxal + ATP = pyridoxal 5'-phosphate + ADP + H(+). The catalysed reaction is pyridoxine + ATP = pyridoxine 5'-phosphate + ADP + H(+). It catalyses the reaction pyridoxamine + ATP = pyridoxamine 5'-phosphate + ADP + H(+). Its pathway is cofactor metabolism; pyridoxal 5'-phosphate salvage; pyridoxal 5'-phosphate from pyridoxal: step 1/1. The protein operates within cofactor metabolism; pyridoxal 5'-phosphate salvage; pyridoxine 5'-phosphate from pyridoxine: step 1/1. It functions in the pathway cofactor metabolism; pyridoxal 5'-phosphate salvage; pyridoxamine 5'-phosphate from pyridoxamine: step 1/1. B6-vitamer kinase involved in the salvage pathway of pyridoxal 5'-phosphate (PLP). Catalyzes the phosphorylation of pyridoxine (PN), pyridoxal (PL), and pyridoxamine (PM), forming their respective 5'-phosphorylated esters, i.e. PNP, PLP and PMP. The sequence is that of Pyridoxine/pyridoxal/pyridoxamine kinase from Bordetella bronchiseptica (strain ATCC BAA-588 / NCTC 13252 / RB50) (Alcaligenes bronchisepticus).